A 782-amino-acid polypeptide reads, in one-letter code: MGSDWDEIKRLAADFQKAQLTSTLQKLSERNCVEIVTLLLEKQMLEVVFTNDGKEYITPDHLEREIQDELYVNGGRANLVEVSKTLNVDLSRIELLAERISAENQSVHLVLGQLIDEDYISHIAQEINEKLVQRGEVSISELASQFDLPSDFLQHDVVEKHLGKIIKGRQDASNPRVFFTQAYIQRCKAKIRGALAAITRPINVAVILQKIGVQEKIFYSLLDEIAPAGQVTSKQANSQYVPHIYAKTQADWVNSFYKQNSFLEYDAIQKLGISDAKSYIRKQFPNEEFLYLKRVALGARLVELTVVTALNECSATKQYLDLTTILPSNLSEEDIEEVFSTIMAQKHSNPSNFVYLDGIVFSQPYLAQLVQPCQALAESQAKAAIDGGVYQQYIVEKTLAQKGNVSTQELEDEGKVDKRDERRKKASSGKAGGGAQGRETKTKSTKKHQRGKAAAQFDSDDEDDAQQGSRGGGGASKKAVKPLELVKTADIVKLITASLEEEGLEHLSKSIASLYTNQFNQTALARAQELFEATPQTNRRQTHAAIQDRINTLLIDIRLYEKGLKLFPQDTQTQLVKYLLKSLGNEICNELSLYVASECNLTVKNTNLNVDQRNKLAQECEAQYRAALLEQNKALNKSIDDFELATETVLKTCSMIIKKVDKKKDRLLIADHKKKLQKQLLECNEPALLLHLAALILFTTITGSILHASGKFVSAILQHIRGSLNEDQNALLLRYHDLVLQVLQAIPDSNESKLANEHLQTMQNQVVELAQNFSRASISKAD.

Residues 404–478 form a disordered region; it reads NVSTQELEDE…SRGGGGASKK (75 aa).

Belongs to the UFL1 family.

Its function is as follows. E3 UFM1-protein ligase that mediates ufmylation of target proteins. This is E3 UFM1-protein ligase 1 homolog from Drosophila melanogaster (Fruit fly).